The primary structure comprises 347 residues: Isopentenyl-diphosphate delta-isomerase (347 aa).

The segment at 1 to 31 is disordered; it reads MDESNSQFEKRKRDHIRIALDPRSQTDGQNG. Residues 8-20 are compositionally biased toward basic and acidic residues; it reads FEKRKRDHIRIAL. Residue 11–12 participates in substrate binding; sequence RK. Residues Ser72, 73–75, Ser103, and Asn132 each bind FMN; that span reads SMT. 103–105 contacts substrate; it reads SQR. Gln166 provides a ligand contact to substrate. Mg(2+) is bound at residue Glu167. Residues Lys198, Ser223, Thr228, 279–281, and 300–301 each bind FMN; these read GVR and AK.

It belongs to the IPP isomerase type 2 family. In terms of assembly, homooctamer. Dimer of tetramers. It depends on FMN as a cofactor. The cofactor is NADPH. Mg(2+) serves as cofactor.

It localises to the cytoplasm. The enzyme catalyses isopentenyl diphosphate = dimethylallyl diphosphate. Its function is as follows. Involved in the biosynthesis of isoprenoids. Catalyzes the 1,3-allylic rearrangement of the homoallylic substrate isopentenyl (IPP) to its allylic isomer, dimethylallyl diphosphate (DMAPP). The polypeptide is Isopentenyl-diphosphate delta-isomerase (Bdellovibrio bacteriovorus (strain ATCC 15356 / DSM 50701 / NCIMB 9529 / HD100)).